The sequence spans 1293 residues: DNA repair protein complementing XP-C cells homolog (1293 aa).

5 disordered regions span residues 1 to 199 (MSDE…FEDK), 217 to 239 (ERTR…QAAT), 255 to 341 (QSVE…NISG), 514 to 640 (DLIP…SKCL), and 658 to 919 (LSSK…EPAK). The span at 18–30 (DEWKPSKDVKGGE) shows a compositional bias: basic and acidic residues. Ser-31, Ser-32, and Ser-37 each carry phosphoserine. A compositionally biased stretch (acidic residues) spans 31-43 (SSDDDDSDFDELQ). Residues 51-60 (SSGRSSAVAG) show a composition bias toward low complexity. Composition is skewed to polar residues over residues 101–130 (FPTS…SGAR) and 226–238 (RNVT…SQAA). The segment covering 288 to 301 (SKTKSTRIKRHTKT) has biased composition (basic residues). The span at 313–335 (DTDDSDFEEVADADLSSDQDDGE) shows a compositional bias: acidic residues. Basic and acidic residues predominate over residues 520 to 578 (LRPDDKNKSQTVESERESEDEKPKKDKKAGKPAEKESSKSTISKEAEKKNNAKKAEAKP). Phosphoserine is present on residues Ser-533 and Ser-537. A compositionally biased stretch (low complexity) spans 580-594 (SKSTTKGSETTKSGT). Residues 598-612 (VKKELSLSSKLVEKS) are compositionally biased toward basic and acidic residues. Low complexity predominate over residues 658-692 (LSSKLVLKSKNQSSFSSNKSDTSFEENPSTSSSSK). The segment covering 693–711 (SLKEETAKLSSSKLEDKKV) has biased composition (basic and acidic residues). Residues 720–737 (KVQSSLLKRVTTQNISES) show a composition bias toward polar residues. Over residues 806–818 (HLQEQRNTRETRS) the composition is skewed to basic and acidic residues. 2 positions are modified to phosphoserine: Ser-908 and Ser-911. 3 consecutive short sequence motifs (nuclear localization signal) follow at residues 922–938 (KKAP…RKDR), 1195–1211 (KKTV…ICKK), and 1275–1291 (KKLI…KKKY).

The protein belongs to the XPC family. As to quaternary structure, heterodimer.

Its subcellular location is the nucleus. Functionally, involved in DNA excision repair. May play a part in DNA damage recognition and/or in altering chromatin structure to allow access by damage-processing enzymes. Involved in nucleotide excision repair of DNA damaged with UV light, bulky adducts, or cross-linking agents. This chain is DNA repair protein complementing XP-C cells homolog, found in Drosophila melanogaster (Fruit fly).